The chain runs to 318 residues: Small ribosomal subunit protein uS3 (318 aa).

The region spanning 17 to 86 (MDEYFAEQLS…NPQIDAQEVK (70 aa)) is the KH type-2 domain. Basic and acidic residues predominate over residues 198–229 (SVEVEEPAEKPAEKPAEKPAEKAAAPKKEAAK). A disordered region spans residues 198 to 275 (SVEVEEPAEK…VQAETSEEIE (78 aa)). A compositionally biased stretch (pro residues) spans 234–250 (APAPEAPAPAPEAPAPA). The segment covering 253 to 275 (EEAEVAEPEEAEEVQAETSEEIE) has biased composition (acidic residues).

Belongs to the universal ribosomal protein uS3 family. In terms of assembly, part of the 30S ribosomal subunit.

In terms of biological role, binds the lower part of the 30S subunit head. This Methanosarcina acetivorans (strain ATCC 35395 / DSM 2834 / JCM 12185 / C2A) protein is Small ribosomal subunit protein uS3.